The primary structure comprises 711 residues: Tyrosine-protein phosphatase 2 (711 aa).

In terms of domain architecture, Rhodanese spans 21 to 130 (TESVSWIIDL…FASSHPDAIV (110 aa)). Disordered regions lie at residues 275-306 (APQQTPARPSLRSVPSYPSSNNQRRPSASRVR) and 329-376 (IIPR…RANK). Polar residues-rich tracts occupy residues 290–306 (SYPSSNNQRRPSASRVR) and 340–363 (NAQNDGTSTMTSKLKPSVGLSNTR). The Tyrosine-protein phosphatase domain occupies 433 to 698 (EMTRSLAFND…KFLYDVVDYL (266 aa)). Residue cysteine 630 is the Phosphocysteine intermediate of the active site.

This sequence belongs to the protein-tyrosine phosphatase family. Non-receptor class subfamily.

Its subcellular location is the cytoplasm. It carries out the reaction O-phospho-L-tyrosyl-[protein] + H2O = L-tyrosyl-[protein] + phosphate. Functionally, plays a role in inhibiting the onset of mitosis. Dephosphorylates sty1/spc1 and wis1/spc2/sty2. This is Tyrosine-protein phosphatase 2 (pyp2) from Schizosaccharomyces pombe (strain 972 / ATCC 24843) (Fission yeast).